Here is a 77-residue protein sequence, read N- to C-terminus: Acyl carrier protein (77 aa).

A Carrier domain is found at 2–77 (STIEERVKKV…EAIDYVVAHQ (76 aa)). Ser37 bears the O-(pantetheine 4'-phosphoryl)serine mark.

It belongs to the acyl carrier protein (ACP) family. 4'-phosphopantetheine is transferred from CoA to a specific serine of apo-ACP by AcpS. This modification is essential for activity because fatty acids are bound in thioester linkage to the sulfhydryl of the prosthetic group.

Its subcellular location is the cytoplasm. It functions in the pathway lipid metabolism; fatty acid biosynthesis. Its function is as follows. Carrier of the growing fatty acid chain in fatty acid biosynthesis. The chain is Acyl carrier protein from Chromohalobacter salexigens (strain ATCC BAA-138 / DSM 3043 / CIP 106854 / NCIMB 13768 / 1H11).